Here is a 175-residue protein sequence, read N- to C-terminus: Polyadenylate-binding protein-interacting protein 6 (175 aa).

A PAM2-like motif is present at residues 7–17 (TLNPYAAAYVP). Residues 83 to 126 (EMDMDIEYLLATYPGLSQESINDVYLANTCDLDATIEMLNQLEI) form the CUE domain. Residues 145–175 (PEIITESSKQKNDGSSASSSSGIRNANVSSS) form a disordered region. The segment covering 166–175 (GIRNANVSSS) has biased composition (polar residues).

This is Polyadenylate-binding protein-interacting protein 6 (CID6) from Arabidopsis thaliana (Mouse-ear cress).